We begin with the raw amino-acid sequence, 871 residues long: MILFDKNKRILKKYAKMVSKINQIESDLRSKKNSELIRLSMVLKEKVNSFEDADEHLFEAFALVREAARRTLGMRPFDVQVMGGIALHEGKVAEMKTGEGKTLAATMPIYLNALIGKGVHLVTVNDYLARRDALWMGPVYLFLGLRVGVINSLGKSYEVVWKNPDLARKAIEENWSVWPDGFNGEVLKEESMNKEAVEAFQVELKEITRKEAYLCDVTYGTNNEFGFDYLRDNLVLDYNDKVQRGHFYAIVDEADSVLIDEARTPLIISGPSKESPSVYRRFAQIAKKFVKDKDFTVDEKARTIILTEEGVAKAEKIIGVENLYDPGNVSLLYHLINALKALHLFKKDVDYVVMNGEVIIVDEFTGRLLPGRRYSGGLHQAIEAKEGVPIKEESITYATITFQNYFRMYEKLAGMTGTAKTEESEFVQVYGMEVVVIPTHKPMIRKDHDDLVFRTQKEKYEKIVEEIEKRYKKGQPVLVGTTSIEKSELLSSMLKKKGIPHQVLNAKYHEKEAEIVAKAGQKGMVTIATNMAGRGTDIKLGPGVAELGGLCIIGTERHESRRIDNQLRGRAGRQGDPGESIFFLSLEDDLLRIFGSEQIGKVMNILKIEEGQPIQHPMLSKLIENIQKKVEGINFSIRKTLMEMDDVLDKQRRAVYSLRDQILLEKDYDEYLKDIFEDVVSTRVEEFCSGKNWDIESLKNSLSFFPAGLFDLDEKQFSSSEELHDYLFNRLWEEYQRKKQEIGEDYRKVIRFLMLRIIDDHWRRYLEEVEHVKEAVQLRSYGQKDPIVEFKKETYYMFDEMMRRINDTIANYVLRVVKVSEKDEKEAKEELGKIRLVHEEFNLVNRAMRRATEKKKKKDGLHSFGRIRVKR.

ATP contacts are provided by residues Q80, 98–102 (GEGKT), and D537.

It belongs to the SecA family. As to quaternary structure, monomer and homodimer. Part of the essential Sec protein translocation apparatus which comprises SecA, SecYEG and auxiliary proteins SecDF. Other proteins may also be involved. A single SecA monomer interacts with SecY in the channel.

The protein localises to the cell inner membrane. It localises to the cytoplasm. The catalysed reaction is ATP + H2O + cellular proteinSide 1 = ADP + phosphate + cellular proteinSide 2.. Functionally, part of the Sec protein translocase complex. Interacts with the SecYEG preprotein conducting channel. Has a central role in coupling the hydrolysis of ATP to the transfer of proteins into and across the cell membrane, serving as an ATP-driven molecular motor driving the stepwise translocation of polypeptide chains across the membrane. The sequence is that of Protein translocase subunit SecA from Thermotoga maritima (strain ATCC 43589 / DSM 3109 / JCM 10099 / NBRC 100826 / MSB8).